The primary structure comprises 507 residues: WD repeat-containing protein fzy-1 (507 aa).

2 disordered regions span residues 1–39 and 74–95; these read MNNKGRTPGSAGRTVRSSAQQNGLTMRKRDMTPTRNTNL and NKENLNNSMSEPNSPEKKSVEG. Polar residues-rich tracts occupy residues 15-24 and 74-86; these read VRSSAQQNGL and NKENLNNSMSEPN. 4 WD repeats span residues 219-258, 313-352, 364-406, and 411-450; these read TNEGLITSVRWSQEGRYISLGYASGAVKIYDPNRPKTTEY, GHCRDVTALEWSADENMCVSGSSDRTAKIWDGRHVRGSTV, EHTG…QKVR, and CETGGVGGIVFNRPYSEMLTASDDGFLRIYRFNANYKLSH.

The protein belongs to the WD repeat CDC20/Fizzy family.

It localises to the chromosome. Its subcellular location is the cytoplasm. Its function is as follows. Plays a role in metaphase-anaphase transition during meiosis I. Required for embryonic anterior-posterior axis formation. The protein is WD repeat-containing protein fzy-1 of Caenorhabditis elegans.